The chain runs to 353 residues: Putative glycosyltransferase TagX (353 aa).

This sequence belongs to the glycosyltransferase 2 family.

This is Putative glycosyltransferase TagX (tagX) from Staphylococcus aureus (strain MRSA252).